The primary structure comprises 520 residues: FAD-linked oxidoreductase OXR2 (520 aa).

The first 23 residues, 1–23 (MKSFSLLASAGLATLASLPLTMA), serve as a signal peptide directing secretion. N-linked (GlcNAc...) asparagine glycans are attached at residues Asn-77, Asn-220, Asn-378, and Asn-390. The FAD-binding PCMH-type domain maps to 79 to 251 (SRPTIRLVVV…TSFQSKIYPR (173 aa)).

This sequence belongs to the oxygen-dependent FAD-linked oxidoreductase family. Requires FAD as cofactor.

It functions in the pathway polyketide biosynthesis. In terms of biological role, FAD-linked oxidoreductase; part of the gene cluster that mediates the biosynthesis of pyriculol and pyriculariol, two heptaketides that induce lesion formation upon application on rice leaves but are dispensable for pathogenicity. The highly reducing polyketide synthase synthesizes the heptaketide backbone of pyriculol and pyriculariol. Pyriculol and pyriculariol contain several hydroxyl moieties and double bonds, so it can be assumed that several reduction steps occur during biosynthesis. These reactions could be executed by PKS19 itself or partly by the tailoring enzymes OXR1, OXR2, RED1, RED2 or RED3, identified within the cluster. The FAD-linked oxidoreductase OXR1 is the only tailoring enzyme for which the function has been determined yet, and is involved in the oxidation of dihydropyriculol and dihydropyriculariol into pyriculol and pyriculariol, respectively. In Pyricularia oryzae (strain 70-15 / ATCC MYA-4617 / FGSC 8958) (Rice blast fungus), this protein is FAD-linked oxidoreductase OXR2.